The chain runs to 272 residues: MVPTMIYSAILALSAFTPSVLAQTRSSGCGKQPSLTNGVHNINGREYILKVPDNYDKNKAHHLVFGLHWRGGNMWNIVDGQSVQPWYGLETRAQGSTIFVAPNGKNAGWANNGGEDIAFIDAIIKQVEGDLCVDQSSRFATGFSWGGGMSYSLACSRAKQFRAVSVLSGGVISGCDGGNDPIAYLGIHGINDGVLPFQGGVNLAQKFVKNNRCQQANVGTPQPGSHGSVRTDFKGCSKPVSFIAYDGGHDAAPLGVGSSLAPDATWKFFMAA.

A signal peptide spans 1–22; that stretch reads MVPTMIYSAILALSAFTPSVLA.

It belongs to the faeC family.

Its subcellular location is the secreted. The enzyme catalyses feruloyl-polysaccharide + H2O = ferulate + polysaccharide.. In terms of biological role, involved in degradation of plant cell walls. Hydrolyzes the feruloyl-arabinose ester bond in arabinoxylans, and the feruloyl-galactose ester bond in pectin. Active against paranitrophenyl-acetate, methyl ferulate and wheat arabinoxylan. The protein is Probable feruloyl esterase C (faeC) of Neosartorya fischeri (strain ATCC 1020 / DSM 3700 / CBS 544.65 / FGSC A1164 / JCM 1740 / NRRL 181 / WB 181) (Aspergillus fischerianus).